The sequence spans 71 residues: DNA-directed RNA polymerase subunit epsilon (71 aa).

This sequence belongs to the RNA polymerase subunit epsilon family. In terms of assembly, RNAP is composed of a core of 2 alpha, a beta and a beta' subunit. The core is associated with a delta subunit, and at least one of epsilon or omega. When a sigma factor is associated with the core the holoenzyme is formed, which can initiate transcription.

The catalysed reaction is RNA(n) + a ribonucleoside 5'-triphosphate = RNA(n+1) + diphosphate. Its function is as follows. A non-essential component of RNA polymerase (RNAP). This chain is DNA-directed RNA polymerase subunit epsilon, found in Geobacillus thermodenitrificans (strain NG80-2).